We begin with the raw amino-acid sequence, 484 residues long: tRNA sulfurtransferase (484 aa).

One can recognise a THUMP domain in the interval Glu-63–Arg-167. Residues Leu-185–Ile-186, Lys-267, Gly-289, and Gln-298 contribute to the ATP site. Cys-346 and Cys-458 are joined by a disulfide. One can recognise a Rhodanese domain in the interval Ile-406–Pro-484. Cys-458 serves as the catalytic Cysteine persulfide intermediate.

It belongs to the ThiI family.

The protein localises to the cytoplasm. It catalyses the reaction [ThiI sulfur-carrier protein]-S-sulfanyl-L-cysteine + a uridine in tRNA + 2 reduced [2Fe-2S]-[ferredoxin] + ATP + H(+) = [ThiI sulfur-carrier protein]-L-cysteine + a 4-thiouridine in tRNA + 2 oxidized [2Fe-2S]-[ferredoxin] + AMP + diphosphate. The enzyme catalyses [ThiS sulfur-carrier protein]-C-terminal Gly-Gly-AMP + S-sulfanyl-L-cysteinyl-[cysteine desulfurase] + AH2 = [ThiS sulfur-carrier protein]-C-terminal-Gly-aminoethanethioate + L-cysteinyl-[cysteine desulfurase] + A + AMP + 2 H(+). It functions in the pathway cofactor biosynthesis; thiamine diphosphate biosynthesis. Catalyzes the ATP-dependent transfer of a sulfur to tRNA to produce 4-thiouridine in position 8 of tRNAs, which functions as a near-UV photosensor. Also catalyzes the transfer of sulfur to the sulfur carrier protein ThiS, forming ThiS-thiocarboxylate. This is a step in the synthesis of thiazole, in the thiamine biosynthesis pathway. The sulfur is donated as persulfide by IscS. This Shewanella piezotolerans (strain WP3 / JCM 13877) protein is tRNA sulfurtransferase.